The primary structure comprises 365 residues: G-protein coupled receptor 68 (365 aa).

Residues 1–12 (MGNITADNSSMS) are Extracellular-facing. N-linked (GlcNAc...) asparagine glycans are attached at residues N3 and N8. The helical transmembrane segment at 13–49 (CTIDHTIHQTLAPVVYVTVLVVGFPANCLSLYFGYLQ) threads the bilayer. 2 cysteine pairs are disulfide-bonded: C13/C258 and C94/C172. Residues 50–53 (IKAR) lie on the Cytoplasmic side of the membrane. The helical transmembrane segment at 54–84 (NELGVYLCNLTVADLFYICSLPFWLQYVLQH) threads the bilayer. The Extracellular portion of the chain corresponds to 85 to 89 (DNWSH). A helical transmembrane segment spans residues 90–125 (GDLSCQVCGILLYENIYISVGFLCCISVDRYLAVAH). Over 126–133 (PFRFHQFR) the chain is Cytoplasmic. A helical transmembrane segment spans residues 134–160 (TLKAAVGVSVVIWAKELLTSIYFLMHE). At 161-176 (EVIEDENQHRVCFEHY) the chain is on the extracellular side. Positions 161-176 (EVIEDENQHRVCFEHY) are extracellular loop 2 (ECL2). A helical transmembrane segment spans residues 177–214 (PIQAWQRAINYYRFLVGFLFPICLLLASYQGILRAVRR). The Cytoplasmic segment spans residues 215 to 218 (SHGT). The chain crosses the membrane as a helical span at residues 219-254 (QKSRKDQIQRLVLSTVVIFLACFLPYHVLLLVRSVW). Topologically, residues 255–260 (EASCDF) are extracellular. A helical membrane pass occupies residues 261 to 289 (AKGVFNAYHFSLLLTSFNCVADPVLYCFV). Residues 290 to 365 (SETTHRDLAR…SGGFPTGRLA (76 aa)) lie on the Cytoplasmic side of the membrane. The tract at residues 345–365 (HPAFQTPNSPGSGGFPTGRLA) is disordered. The segment covering 355–365 (GSGGFPTGRLA) has biased composition (gly residues).

The protein belongs to the G-protein coupled receptor 1 family. In terms of tissue distribution, found at low level in a wide range of tissues, but significantly expressed in lung, kidney, bone and nervous system.

The protein localises to the cell membrane. Its activity is regulated as follows. Activated by a network of residues that connects an extracellular-facing cavity to Glu-149, a conserved charged residue buried in the transmembrane core of the receptor. Protonation likely drives conformational changes in extracellular loop 2 (ECL2), which stabilizes movement of transmembrane 3 (TM3) and a series of rearrangements that connect the extracellular-facing cavity to Glu-149, a residue only conserved in proton-sensing G-protein coupled receptors. Activated in an allosteric manner by divalent metal ions at the extracellular surface following the order: Cd(2+) &gt; Co(2+) &gt; Ni(2+) &gt; Zn(2+) &gt; Fe(2+) &gt; Ca(2+) &gt; Mg(2+). Activated by the benzodiazepine drug lorazepam, a non-selective GPR68 positive allosteric modulator. Activated by ogerin (ZINC67740571), a selective GPR68 positive allosteric modulator. Activated by small molecule MS48107, a selective positive allosteric modulator. Inhibited by small molecule ogremorphin, inducing ferroptosis in cancer cells. Proton-sensing G-protein coupled receptor activated by extracellular pH, which is required to monitor pH changes and generate adaptive reactions. The receptor is almost silent at pH 7.8 but fully activated at pH 6.8. Ligand binding causes a conformation change that triggers signaling via guanine nucleotide-binding proteins (G proteins) and modulates the activity of downstream effectors, such as phospholipase C. GPR68 is mainly coupled to G(q) G proteins and mediates production of diacylglycerol (DAG) and inositol 1,4,5-trisphosphate (IP3). Acts as a key mechanosensor of fluid shear stress and membrane stretch. Expressed in endothelial cells of small-diameter resistance arteries, where it mediates flow-induced dilation in response to shear stress. May represents an osteoblastic pH sensor regulating cell-mediated responses to acidosis in bone. Acts as a regulator of calcium-sensing receptor CASR in a seesaw manner: GPR68-mediated signaling inhibits CASR signaling in response to protons, while CASR inhibits GPR68 in presence of extracellular calcium. The chain is G-protein coupled receptor 68 from Homo sapiens (Human).